The following is an 84-amino-acid chain: Exodeoxyribonuclease 7 small subunit (84 aa).

Belongs to the XseB family. In terms of assembly, heterooligomer composed of large and small subunits.

It localises to the cytoplasm. The enzyme catalyses Exonucleolytic cleavage in either 5'- to 3'- or 3'- to 5'-direction to yield nucleoside 5'-phosphates.. Functionally, bidirectionally degrades single-stranded DNA into large acid-insoluble oligonucleotides, which are then degraded further into small acid-soluble oligonucleotides. The polypeptide is Exodeoxyribonuclease 7 small subunit (Janthinobacterium sp. (strain Marseille) (Minibacterium massiliensis)).